The sequence spans 274 residues: Orotidine 5'-phosphate decarboxylase (274 aa).

The Proton donor role is filled by K95.

It belongs to the OMP decarboxylase family. Type 2 subfamily.

It catalyses the reaction orotidine 5'-phosphate + H(+) = UMP + CO2. It participates in pyrimidine metabolism; UMP biosynthesis via de novo pathway; UMP from orotate: step 2/2. This chain is Orotidine 5'-phosphate decarboxylase, found in Mycolicibacterium paratuberculosis (strain ATCC BAA-968 / K-10) (Mycobacterium paratuberculosis).